Here is a 451-residue protein sequence, read N- to C-terminus: 3-phosphoshikimate 1-carboxyvinyltransferase (451 aa).

3 residues coordinate 3-phosphoshikimate: Lys30, Ser31, and Arg35. Lys30 serves as a coordination point for phosphoenolpyruvate. 2 residues coordinate phosphoenolpyruvate: Gly103 and Arg131. 3-phosphoshikimate contacts are provided by Ser176, Gln178, Asp329, and Lys356. Gln178 provides a ligand contact to phosphoenolpyruvate. Asp329 serves as the catalytic Proton acceptor. Residues Arg360 and Arg404 each coordinate phosphoenolpyruvate.

It belongs to the EPSP synthase family. As to quaternary structure, monomer.

It localises to the cytoplasm. The enzyme catalyses 3-phosphoshikimate + phosphoenolpyruvate = 5-O-(1-carboxyvinyl)-3-phosphoshikimate + phosphate. The protein operates within metabolic intermediate biosynthesis; chorismate biosynthesis; chorismate from D-erythrose 4-phosphate and phosphoenolpyruvate: step 6/7. Functionally, catalyzes the transfer of the enolpyruvyl moiety of phosphoenolpyruvate (PEP) to the 5-hydroxyl of shikimate-3-phosphate (S3P) to produce enolpyruvyl shikimate-3-phosphate and inorganic phosphate. The chain is 3-phosphoshikimate 1-carboxyvinyltransferase from Parvibaculum lavamentivorans (strain DS-1 / DSM 13023 / NCIMB 13966).